The following is a 293-amino-acid chain: Fructose-bisphosphate aldolase class 1 (293 aa).

The active-site Proton acceptor is the glutamate 176. Residue lysine 211 is the Schiff-base intermediate with dihydroxyacetone-P of the active site.

This sequence belongs to the class I fructose-bisphosphate aldolase family.

The catalysed reaction is beta-D-fructose 1,6-bisphosphate = D-glyceraldehyde 3-phosphate + dihydroxyacetone phosphate. Its pathway is carbohydrate degradation; glycolysis; D-glyceraldehyde 3-phosphate and glycerone phosphate from D-glucose: step 4/4. In Porphyromonas gingivalis (strain ATCC 33277 / DSM 20709 / CIP 103683 / JCM 12257 / NCTC 11834 / 2561), this protein is Fructose-bisphosphate aldolase class 1.